A 570-amino-acid chain; its full sequence is Methionine--tRNA ligase (570 aa).

The 'HIGH' region motif lies at 11–21; that stretch reads PYVQTVPHLGN. Zn(2+)-binding residues include C143, C146, C156, and C159. A 'KMSKS' region motif is present at residues 333 to 337; it reads KFSKS. Residue K336 coordinates ATP.

This sequence belongs to the class-I aminoacyl-tRNA synthetase family. MetG type 1 subfamily. Zn(2+) serves as cofactor.

Its subcellular location is the cytoplasm. The enzyme catalyses tRNA(Met) + L-methionine + ATP = L-methionyl-tRNA(Met) + AMP + diphosphate. Functionally, is required not only for elongation of protein synthesis but also for the initiation of all mRNA translation through initiator tRNA(fMet) aminoacylation. The sequence is that of Methionine--tRNA ligase from Pyrobaculum arsenaticum (strain DSM 13514 / JCM 11321 / PZ6).